The sequence spans 493 residues: Adenylyltransferase and sulfurtransferase uba4 (493 aa).

ATP contacts are provided by residues Gly99, Asp120, Ser127–Arg131, Lys144, and Asp188–Asn189. Zn(2+) is bound by residues Cys237 and Cys240. The Glycyl thioester intermediate; for adenylyltransferase activity role is filled by Cys254. The Zn(2+) site is built by Cys316 and Cys319. A Rhodanese domain is found at Ile376–Pro491. Cys446 (cysteine persulfide intermediate; for sulfurtransferase activity) is an active-site residue.

It in the N-terminal section; belongs to the HesA/MoeB/ThiF family. UBA4 subfamily. Zn(2+) is required as a cofactor.

The protein localises to the cytoplasm. It is found in the cytosol. It carries out the reaction [molybdopterin-synthase sulfur-carrier protein]-C-terminal Gly-Gly + ATP + H(+) = [molybdopterin-synthase sulfur-carrier protein]-C-terminal Gly-Gly-AMP + diphosphate. The catalysed reaction is [molybdopterin-synthase sulfur-carrier protein]-C-terminal Gly-Gly-AMP + S-sulfanyl-L-cysteinyl-[cysteine desulfurase] + AH2 = [molybdopterin-synthase sulfur-carrier protein]-C-terminal-Gly-aminoethanethioate + L-cysteinyl-[cysteine desulfurase] + A + AMP + 2 H(+). It functions in the pathway tRNA modification; 5-methoxycarbonylmethyl-2-thiouridine-tRNA biosynthesis. The protein operates within cofactor biosynthesis; molybdopterin biosynthesis. Functionally, plays a central role in 2-thiolation of mcm(5)S(2)U at tRNA wobble positions of cytosolic tRNA(Lys), tRNA(Glu) and tRNA(Gln). Also essential during biosynthesis of the molybdenum cofactor. Acts by mediating the C-terminal thiocarboxylation of sulfur carriers urm1 and mocs2a. Its N-terminus first activates urm1 and mocs2a as acyl-adenylates (-COAMP), then the persulfide sulfur on the catalytic cysteine is transferred to urm1 and mocs2a to form thiocarboxylation (-COSH) of their C-terminus. The reaction probably involves hydrogen sulfide that is generated from the persulfide intermediate and that acts as a nucleophile towards urm1 and mocs2a. Subsequently, a transient disulfide bond is formed. Does not use thiosulfate as sulfur donor; nfs1 probably acting as a sulfur donor for thiocarboxylation reactions. This is Adenylyltransferase and sulfurtransferase uba4 from Aspergillus fumigatus (strain CBS 144.89 / FGSC A1163 / CEA10) (Neosartorya fumigata).